The sequence spans 192 residues: Adenylate kinase (192 aa).

10–18 (GVPGVGGTT) is an ATP binding site.

This sequence belongs to the archaeal adenylate kinase family. Monomer.

It is found in the cytoplasm. The catalysed reaction is AMP + ATP = 2 ADP. The protein is Adenylate kinase of Methanococcus maripaludis (strain C5 / ATCC BAA-1333).